A 134-amino-acid polypeptide reads, in one-letter code: Small ribosomal subunit protein uS8c (134 aa).

Belongs to the universal ribosomal protein uS8 family. Part of the 30S ribosomal subunit.

It localises to the plastid. The protein localises to the chloroplast. Functionally, one of the primary rRNA binding proteins, it binds directly to 16S rRNA central domain where it helps coordinate assembly of the platform of the 30S subunit. The protein is Small ribosomal subunit protein uS8c (rps8) of Arabis hirsuta (Hairy rock-cress).